Reading from the N-terminus, the 1082-residue chain is Importin-4 (1082 aa).

At M1 the chain carries N-acetylmethionine. Residues 24–90 enclose the Importin N-terminal domain; sequence ATEQLQTILR…KSLVLTALQK (67 aa). HEAT repeat units lie at residues 348–385, 390–427, 431–471, 475–513, 896–933, and 937–975; these read KLCPHVMPMLEEALRSEDPYQRKAGFLVLAVLSDGAGD, RLLYPLLQIVCKGLDDPSQIVRNAALFALGQFSENLQP, SYSE…NLGP, PYLPELMECMLQPLKNPSKARTKELAVSAIGAIATAAQD, QFVSRLFPVLLNNAREADPEVRSNAIFGLGVLAEHGGC, and DHFPKLLGLLLPLLARERHDRVRDNICGALARVLMASPV.

Belongs to the importin beta family. As to quaternary structure, found in a cytosolic complex with ASF1 (ASF1A or ASF1B) and histones H3 and H4.

The protein resides in the cytoplasm. The protein localises to the nucleus. Nuclear transport receptor that mediates nuclear import of proteins, such as histones, RPS3A, TNP2 and VDR. Serves as receptor for nuclear localization signals (NLS) in cargo substrates. Is thought to mediate docking of the importin/substrate complex to the nuclear pore complex (NPC) through binding to nucleoporin and the complex is subsequently translocated through the pore by an energy requiring, Ran-dependent mechanism. At the nucleoplasmic side of the NPC, Ran binds to the importin, the importin/substrate complex dissociates and importin is re-exported from the nucleus to the cytoplasm where GTP hydrolysis releases Ran. The directionality of nuclear import is thought to be conferred by an asymmetric distribution of the GTP- and GDP-bound forms of Ran between the cytoplasm and nucleus. Mediates the nuclear import of the histone H3-H4 dimer when in complex with ASF1 (ASF1A or ASF1B). Mediates the ligand-independent nuclear import of vitamin D receptor (VDR). This Mus musculus (Mouse) protein is Importin-4 (Ipo4).